A 473-amino-acid polypeptide reads, in one-letter code: Trehalose-6-phosphate synthase (473 aa).

Residue R10 participates in D-glucose 6-phosphate binding. 21-22 is a binding site for UDP-alpha-D-glucose; it reads GG. D-glucose 6-phosphate contacts are provided by Y76 and D130. Residues R262 and K267 each contribute to the UDP-alpha-D-glucose site. R300 contacts D-glucose 6-phosphate. UDP-alpha-D-glucose contacts are provided by residues F339 and 365-369; that span reads LVAKE. The interval 454–473 is disordered; it reads TPRSPERQQQNNVATFPKLA.

This sequence belongs to the glycosyltransferase 20 family. Homotetramer.

It carries out the reaction D-glucose 6-phosphate + UDP-alpha-D-glucose = alpha,alpha-trehalose 6-phosphate + UDP + H(+). It participates in glycan biosynthesis; trehalose biosynthesis. Probably involved in the osmoprotection via the biosynthesis of trehalose. Catalyzes the transfer of glucose from UDP-alpha-D-glucose (UDP-Glc) to D-glucose 6-phosphate (Glc-6-P) to form trehalose-6-phosphate. Acts with retention of the anomeric configuration of the UDP-sugar donor. This is Trehalose-6-phosphate synthase from Salmonella choleraesuis (strain SC-B67).